The chain runs to 358 residues: MDLVRGLWRKHRRKILVTTTCLGSGYLLYKLYNAHTRKLADLERELANERENDEIIKTQMKAHFDNIQMIADTTTLPHAIHHLSSRVVEEIDVSSIMDKLSKGKGILIPSEKLQLWNELKILSFTRMVLSLWSVTMLSLYIRVQVNILGRHLYIDTARGLGSSHLLDELDLIERDDEQKFLTSADFLATSGMPSLISNMQNAVKEVLKGKQLKDVLTTSALRETVMRILDVFMSTGSPHHWVDYLMMSQDATTDVSSSDATVTKFHLLITETREVLTSNDFSNVAEISLKCCAVALVEEMETQTGLATGMQLAKLLPQIEKTMPEISAEPEKNRFLQLIRDLPEVKLFFTLLYANMPQ.

A helical membrane pass occupies residues 15–32; sequence ILVTTTCLGSGYLLYKLY. A coiled-coil region spans residues 33 to 62; it reads NAHTRKLADLERELANERENDEIIKTQMKA.

The protein belongs to the peroxin-3 family.

It is found in the peroxisome membrane. Functionally, involved in morphology determination of peroxisomes, but not in import of peroxisomal matrix proteins. May act as a docking factor for PEX19 and be necessary for the import of peroxisomal membrane proteins in the peroxisomes. In Arabidopsis thaliana (Mouse-ear cress), this protein is Peroxisome biogenesis protein 3-1 (PEX3-1).